A 60-amino-acid polypeptide reads, in one-letter code: Cytotoxin 5 (60 aa).

4 disulfide bridges follow: C3–C21, C14–C38, C42–C53, and C54–C59.

Belongs to the three-finger toxin family. Short-chain subfamily. Type IA cytotoxin sub-subfamily. In terms of assembly, monomer in solution; Homodimer and oligomer in the presence of negatively charged lipids forming a pore with a size ranging between 20 and 30 Angstroms. Expressed by the venom gland.

It is found in the secreted. The protein localises to the target cell membrane. Its function is as follows. Shows cytolytic activity on many different cells by forming pore in lipid membranes. In vivo, increases heart rate or kills the animal by cardiac arrest. In addition, it binds to heparin with high affinity, interacts with Kv channel-interacting protein 1 (KCNIP1) in a calcium-independent manner, and binds to integrin alpha-V/beta-3 (ITGAV/ITGB3) with moderate affinity. The sequence is that of Cytotoxin 5 from Naja mossambica (Mozambique spitting cobra).